The primary structure comprises 505 residues: RNA-splicing ligase RtcB homolog (505 aa).

Residues Asp-119, Cys-122, His-227, His-259, and His-353 each contribute to the Mn(2+) site. Asn-226 to Glu-230 serves as a coordination point for GMP. Residues His-353–Asn-354, Gly-402–Met-405, Ser-409, His-428–Gly-431, and Lys-504 each bind GMP. His-428 functions as the GMP-histidine intermediate in the catalytic mechanism.

Belongs to the RtcB family. As to quaternary structure, catalytic component of the tRNA-splicing ligase complex. Requires Mn(2+) as cofactor.

The protein resides in the nucleus. It localises to the cytoplasm. It carries out the reaction a 3'-end 3'-phospho-ribonucleotide-RNA + a 5'-end dephospho-ribonucleoside-RNA + GTP = a ribonucleotidyl-ribonucleotide-RNA + GMP + diphosphate. The enzyme catalyses a 3'-end 2',3'-cyclophospho-ribonucleotide-RNA + a 5'-end dephospho-ribonucleoside-RNA + GTP + H2O = a ribonucleotidyl-ribonucleotide-RNA + GMP + diphosphate + H(+). In terms of biological role, catalytic subunit of the tRNA-splicing ligase complex that acts by directly joining spliced tRNA halves to mature-sized tRNAs by incorporating the precursor-derived splice junction phosphate into the mature tRNA as a canonical 3',5'-phosphodiester. May act as an RNA ligase with broad substrate specificity, and may function toward other RNAs. This is RNA-splicing ligase RtcB homolog from Xenopus tropicalis (Western clawed frog).